Consider the following 640-residue polypeptide: 5-aminolevulinate synthase, non-specific, mitochondrial (640 aa).

A mitochondrion-targeting transit peptide spans 1 to 56 (METVVRSCPFLSRVPQAFLQKAGKSLLFYAQNCPKMMEVGAKPAPRALSTAAVHYQ). Disordered stretches follow at residues 60–103 (ETPP…TSQG) and 143–163 (EVAE…GGDP). Positions 75–92 (VQQTPDGSQQSPDGTQLP) are enriched in polar residues. Substrate is bound by residues arginine 217, serine 334, and lysine 353. Positions 386, 414, and 442 each coordinate pyridoxal 5'-phosphate. Lysine 445 is an active-site residue. N6-(pyridoxal phosphate)lysine is present on lysine 445. Residues threonine 474 and threonine 475 each coordinate pyridoxal 5'-phosphate. Position 562 (threonine 562) interacts with substrate. Residue proline 576 is modified to Hydroxyproline.

It belongs to the class-II pyridoxal-phosphate-dependent aminotransferase family. As to quaternary structure, homodimer. Interacts (hydroxylated form) with VHL. Pyridoxal 5'-phosphate serves as cofactor. In terms of processing, in normoxia, is hydroxylated at Pro-576, promoting interaction with VHL, initiating ubiquitination and subsequent degradation via the proteasome. Ubiquitinated; in normoxia following hydroxylation and interaction with VHL, leading to its subsequent degradation via the proteasome.

Its subcellular location is the mitochondrion inner membrane. The catalysed reaction is succinyl-CoA + glycine + H(+) = 5-aminolevulinate + CO2 + CoA. Its pathway is porphyrin-containing compound metabolism; protoporphyrin-IX biosynthesis; 5-aminolevulinate from glycine: step 1/1. Catalyzes the pyridoxal 5'-phosphate (PLP)-dependent condensation of succinyl-CoA and glycine to form aminolevulinic acid (ALA), with CoA and CO2 as by-products. This Pongo abelii (Sumatran orangutan) protein is 5-aminolevulinate synthase, non-specific, mitochondrial (ALAS1).